The sequence spans 201 residues: Large ribosomal subunit protein uL4 (201 aa).

The segment at 45–71 (AQKTRAEVTGSGKKPWRQKGTGRARAG) is disordered.

It belongs to the universal ribosomal protein uL4 family. As to quaternary structure, part of the 50S ribosomal subunit.

In terms of biological role, one of the primary rRNA binding proteins, this protein initially binds near the 5'-end of the 23S rRNA. It is important during the early stages of 50S assembly. It makes multiple contacts with different domains of the 23S rRNA in the assembled 50S subunit and ribosome. Its function is as follows. Forms part of the polypeptide exit tunnel. The sequence is that of Large ribosomal subunit protein uL4 from Shewanella loihica (strain ATCC BAA-1088 / PV-4).